Reading from the N-terminus, the 244-residue chain is 23S rRNA (guanosine-2'-O-)-methyltransferase RlmB (244 aa).

S-adenosyl-L-methionine is bound by residues G196, I216, and L225.

This sequence belongs to the class IV-like SAM-binding methyltransferase superfamily. RNA methyltransferase TrmH family. RlmB subfamily. As to quaternary structure, homodimer.

The protein resides in the cytoplasm. It carries out the reaction guanosine(2251) in 23S rRNA + S-adenosyl-L-methionine = 2'-O-methylguanosine(2251) in 23S rRNA + S-adenosyl-L-homocysteine + H(+). In terms of biological role, specifically methylates the ribose of guanosine 2251 in 23S rRNA. The polypeptide is 23S rRNA (guanosine-2'-O-)-methyltransferase RlmB (Pectobacterium atrosepticum (strain SCRI 1043 / ATCC BAA-672) (Erwinia carotovora subsp. atroseptica)).